The following is a 478-amino-acid chain: Membrane-bound lytic murein transglycosylase F (478 aa).

An N-terminal signal peptide occupies residues 1–29 (MFPDSSYLFSMRSLSRFLIAIFGCGALLA). The tract at residues 30–269 (SCDSFERSVL…RLLDRYYGHI (240 aa)) is non-LT domain. Positions 271–478 (RLHHTDVNGI…RKEDDSWQEF (208 aa)) are LT domain. E316 is a catalytic residue.

This sequence in the N-terminal section; belongs to the bacterial solute-binding protein 3 family. It in the C-terminal section; belongs to the transglycosylase Slt family.

It is found in the cell outer membrane. It carries out the reaction Exolytic cleavage of the (1-&gt;4)-beta-glycosidic linkage between N-acetylmuramic acid (MurNAc) and N-acetylglucosamine (GlcNAc) residues in peptidoglycan, from either the reducing or the non-reducing ends of the peptidoglycan chains, with concomitant formation of a 1,6-anhydrobond in the MurNAc residue.. In terms of biological role, murein-degrading enzyme that degrades murein glycan strands and insoluble, high-molecular weight murein sacculi, with the concomitant formation of a 1,6-anhydromuramoyl product. Lytic transglycosylases (LTs) play an integral role in the metabolism of the peptidoglycan (PG) sacculus. Their lytic action creates space within the PG sacculus to allow for its expansion as well as for the insertion of various structures such as secretion systems and flagella. The polypeptide is Membrane-bound lytic murein transglycosylase F (Nitrosospira multiformis (strain ATCC 25196 / NCIMB 11849 / C 71)).